We begin with the raw amino-acid sequence, 493 residues long: Cysteine--tRNA ligase (493 aa).

Residue Cys31 coordinates Zn(2+). Positions 33 to 43 (PTVYGDAHLGH) match the 'HIGH' region motif. 3 residues coordinate Zn(2+): Cys226, His251, and Glu255. The 'KMSKS' region signature appears at 283-287 (KMGKS). Lys286 provides a ligand contact to ATP.

This sequence belongs to the class-I aminoacyl-tRNA synthetase family. In terms of assembly, monomer. Zn(2+) is required as a cofactor.

Its subcellular location is the cytoplasm. It catalyses the reaction tRNA(Cys) + L-cysteine + ATP = L-cysteinyl-tRNA(Cys) + AMP + diphosphate. The polypeptide is Cysteine--tRNA ligase (Bacteroides thetaiotaomicron (strain ATCC 29148 / DSM 2079 / JCM 5827 / CCUG 10774 / NCTC 10582 / VPI-5482 / E50)).